We begin with the raw amino-acid sequence, 212 residues long: Orotate phosphoribosyltransferase (212 aa).

K26 contacts 5-phospho-alpha-D-ribose 1-diphosphate. Position 34-35 (34-35 (FF)) interacts with orotate. 5-phospho-alpha-D-ribose 1-diphosphate is bound by residues 72–73 (YK), R98, K99, K102, H104, and 123–131 (DDVITAGTA). 2 residues coordinate orotate: T127 and R155.

It belongs to the purine/pyrimidine phosphoribosyltransferase family. PyrE subfamily. In terms of assembly, homodimer. The cofactor is Mg(2+).

The catalysed reaction is orotidine 5'-phosphate + diphosphate = orotate + 5-phospho-alpha-D-ribose 1-diphosphate. It participates in pyrimidine metabolism; UMP biosynthesis via de novo pathway; UMP from orotate: step 1/2. Catalyzes the transfer of a ribosyl phosphate group from 5-phosphoribose 1-diphosphate to orotate, leading to the formation of orotidine monophosphate (OMP). This is Orotate phosphoribosyltransferase from Marinobacter nauticus (strain ATCC 700491 / DSM 11845 / VT8) (Marinobacter aquaeolei).